Consider the following 375-residue polypeptide: Eukaryotic translation initiation factor 3 subunit F (375 aa).

The 137-residue stretch at 30 to 166 (VVIQPQALFS…TRAYISAPVG (137 aa)) folds into the MPN domain. The tract at residues 307–375 (LGGESGSGES…EAQNGKEEKK (69 aa)) is disordered. A compositionally biased stretch (gly residues) spans 323 to 332 (QRGGKGGRGG). Composition is skewed to basic and acidic residues over residues 336–345 (TQERSGEEAR) and 358–375 (RSYEERTNEAQNGKEEKK).

This sequence belongs to the eIF-3 subunit F family. Component of the eukaryotic translation initiation factor 3 (eIF-3) complex.

The protein localises to the cytoplasm. Its function is as follows. Component of the eukaryotic translation initiation factor 3 (eIF-3) complex, which is involved in protein synthesis of a specialized repertoire of mRNAs and, together with other initiation factors, stimulates binding of mRNA and methionyl-tRNAi to the 40S ribosome. The eIF-3 complex specifically targets and initiates translation of a subset of mRNAs involved in cell proliferation. This is Eukaryotic translation initiation factor 3 subunit F from Aspergillus niger (strain ATCC MYA-4892 / CBS 513.88 / FGSC A1513).